The chain runs to 662 residues: Polyunsaturated fatty acid (12S)/(13S)-lipoxygenase, epidermal-type (662 aa).

Residues 2-114 (GKYKILVVTG…TIYLPEGTAL (113 aa)) form the PLAT domain. Residues 114-662 (LKVNDDTKNL…PSMVENSVTI (549 aa)) enclose the Lipoxygenase domain. The Fe cation site is built by H360, H365, H540, H544, and I662.

Belongs to the lipoxygenase family. Requires Fe cation as cofactor.

It localises to the cytoplasm. The enzyme catalyses (5Z,8Z,11Z,14Z)-eicosatetraenoate + O2 = (12S)-hydroperoxy-(5Z,8Z,10E,14Z)-eicosatetraenoate. It carries out the reaction 1-O-methyl-(9Z,12Z)-octadecadienoate + O2 = 1-O-methyl-(13S)-hydroperoxy-(9Z,11E)-octadecadienoate. It catalyses the reaction (8Z,11Z,14Z)-eicosatrienoate + O2 = (12S)-hydroperoxy-(8Z,10E,14Z)-eicosatrienoate. The catalysed reaction is (5Z,8Z,11Z)-eicosatrienoate + O2 = (12S)-hydroperoxy-(5Z,8Z,10E)-eicosatrienoate. The enzyme catalyses 1-O-methyl-(5Z,8Z,11Z,14Z)-eicosatetraenoate + O2 = 1-O-methyl-(12S)-hydroperoxy-(5Z,8Z,10E,14Z)-eicosatetraenoate. It carries out the reaction (9Z,12Z)-octadecadienoate + O2 = (13S)-hydroperoxy-(9Z,11E)-octadecadienoate. It catalyses the reaction (4Z,7Z,10Z,13Z,16Z,19Z)-docosahexaenoate + O2 = (14S)-hydroperoxy-(4Z,7Z,10Z,12E,16Z,19Z)-docosahexaenoate. It functions in the pathway lipid metabolism; hydroperoxy eicosatetraenoic acid biosynthesis. With respect to regulation, arachidonate 12-lipoxygenase activity is decreased when the pH decreases from 7.4 to 6.0. Functionally, catalyzes the regio and stereo-specific incorporation of a single molecule of dioxygen into free and esterified polyunsaturated fatty acids generating lipid hydroperoxides that can be further reduced to the corresponding hydroxy species. Shows increasing catalytic activity within the series arachidonic acid &lt; 5,8,11-eicosatrienoic acid &lt; linoleic acid &lt; 8,11,14-eicosatrienoic acid. The sequence is that of Polyunsaturated fatty acid (12S)/(13S)-lipoxygenase, epidermal-type from Rattus norvegicus (Rat).